A 1517-amino-acid chain; its full sequence is DNA-directed RNA polymerase subunit beta' (1517 aa).

Zn(2+) is bound by residues Cys71, Cys73, Cys86, and Cys89. Mg(2+) is bound by residues Asp482, Asp484, and Asp486. Zn(2+)-binding residues include Cys812, Cys886, Cys893, and Cys896.

This sequence belongs to the RNA polymerase beta' chain family. As to quaternary structure, the RNAP catalytic core consists of 2 alpha, 1 beta, 1 beta' and 1 omega subunit. When a sigma factor is associated with the core the holoenzyme is formed, which can initiate transcription. Requires Mg(2+) as cofactor. The cofactor is Zn(2+).

The enzyme catalyses RNA(n) + a ribonucleoside 5'-triphosphate = RNA(n+1) + diphosphate. Functionally, DNA-dependent RNA polymerase catalyzes the transcription of DNA into RNA using the four ribonucleoside triphosphates as substrates. In Campylobacter jejuni subsp. jejuni serotype O:23/36 (strain 81-176), this protein is DNA-directed RNA polymerase subunit beta'.